The following is a 556-amino-acid chain: Butanoate--CoA ligase AAE1 (556 aa).

A Microbody targeting signal motif is present at residues 554-556 (SKL).

It belongs to the ATP-dependent AMP-binding enzyme family. Expressed in roots, leaves, stems, flowers and developing seeds.

The protein resides in the peroxisome. It catalyses the reaction butanoate + ATP + CoA = butanoyl-CoA + AMP + diphosphate. The catalysed reaction is hexanoate + ATP + CoA = hexanoyl-CoA + AMP + diphosphate. The enzyme catalyses pentanoate + ATP + CoA = pentanoyl-CoA + AMP + diphosphate. It carries out the reaction 4-methylpentanoate + ATP + CoA = 4-methylpentanoyl-CoA + AMP + diphosphate. In terms of biological role, catalyzes the ligation of CoA on butanoate to produce butanoyl-CoA. Can also use hexanoate, pentanoate and 4-methylpentanoate as substrates with a lower efficiency. The protein is Butanoate--CoA ligase AAE1 of Arabidopsis thaliana (Mouse-ear cress).